A 4249-amino-acid polypeptide reads, in one-letter code: Fibrocystin-L (4249 aa).

A signal peptide spans 1–20 (MGHLWLSGTWFLFGLLWCAA). The Extracellular segment spans residues 21–4222 (DSHKGSSETI…TPVQTLAVIT (4202 aa)). IPT/TIG domains are found at residues 31 to 132 (PKVT…GVAS), 146 to 255 (PTIR…KMTY), 270 to 361 (PEVV…ILEY), 1067 to 1153 (PLIL…HFIY), 1155 to 1234 (SQIS…SFSY), 1240 to 1323 (PVVT…KLNA), 1329 to 1468 (LEVI…SFSY), 1565 to 1648 (PSII…TLTK), 1658 to 1742 (PNID…SFSY), 1748 to 1827 (PYVT…NLTI), 1830 to 1909 (PAVA…SFTY), 1915 to 1996 (PFLK…AFEY), 1998 to 2084 (LSIQ…LFTY), and 2090 to 2175 (PLIT…DFLY). One can recognise a PA14 domain in the interval 337-492 (PGGRGLKVEV…NVFTEQQTGD (156 aa)). Threonine 1297 and threonine 1359 each carry an O-linked (GalNAc...) threonine glycan. Residue threonine 1838 is glycosylated (O-linked (GalNAc...) threonine). Residues 2183 to 2303 (SSWGGSPPPE…IPVVWTRLTH (121 aa)) form the G8 1 domain. 5 PbH1 repeats span residues 2484–2506 (QFKSYVKGCAIHQSYNRAITIHN), 2507–2529 (THHLLVERNIIYDIKGGAFFIED), 2565–2587 (NPNNTIRHNAAAGGTHFGFWYRM), 2664–2686 (GGALQFHNFVMVNNNEAGIETKR), and 2732–2755 (SQGLTVSSVHFMNFDRHACVALGV). The region spanning 3035 to 3173 (SFWQSSPENN…HSVYKTKLLE (139 aa)) is the G8 2 domain. PbH1 repeat units lie at residues 3292–3314 (KGNARISNVEFHHSGQEGYRDST), 3354–3376 (TDGVDIDDNIIYFTVGEGIRIWG), 3415–3437 (GTNTVLQNNVVAGFGRVGYRIDG), 3470–3492 (PGCSLIQGFTIWTCWDYGIYFQT), and 3493–3514 (TESVHIYNVTLVNNGMSIFSMV). O-linked (GalNAc...) threonine glycosylation is present at threonine 3735. Positions 4183 to 4208 (LSAQSVPGGSGSSPGSGSSSSGHSKA) are disordered. A compositionally biased stretch (low complexity) spans 4197 to 4208 (GSGSSSSGHSKA). The helical transmembrane segment at 4223–4243 (ACLVGRLLLLEVFMAAVFILN) threads the bilayer. The Cytoplasmic portion of the chain corresponds to 4244–4249 (TTVGIN).

In terms of tissue distribution, expressed in neurons in the hippocampus and the cerebral cortex (at protein level). Transiently expressed at high levels in inner ear hair cells, predominantly in outer hair cells, during early postnatal development (at protein level).

It is found in the membrane. The protein resides in the cell projection. It localises to the stereocilium membrane. Its function is as follows. Component of hair-cell stereocilia coat. Required for normal hearing. The polypeptide is Fibrocystin-L (Pkhd1l1) (Mus musculus (Mouse)).